Consider the following 316-residue polypeptide: tRNA dimethylallyltransferase (316 aa).

Residue 17–24 (GPTASGKT) participates in ATP binding. Substrate is bound at residue 19–24 (TASGKT). Interaction with substrate tRNA stretches follow at residues 42 to 45 (DSAL), 166 to 170 (QRLSR), and 247 to 252 (RCVGYR).

Belongs to the IPP transferase family. As to quaternary structure, monomer. It depends on Mg(2+) as a cofactor.

It catalyses the reaction adenosine(37) in tRNA + dimethylallyl diphosphate = N(6)-dimethylallyladenosine(37) in tRNA + diphosphate. Its function is as follows. Catalyzes the transfer of a dimethylallyl group onto the adenine at position 37 in tRNAs that read codons beginning with uridine, leading to the formation of N6-(dimethylallyl)adenosine (i(6)A). The polypeptide is tRNA dimethylallyltransferase (Salmonella arizonae (strain ATCC BAA-731 / CDC346-86 / RSK2980)).